A 209-amino-acid chain; its full sequence is Large ribosomal subunit protein uL3 (209 aa).

This sequence belongs to the universal ribosomal protein uL3 family. Part of the 50S ribosomal subunit. Forms a cluster with proteins L14 and L19.

In terms of biological role, one of the primary rRNA binding proteins, it binds directly near the 3'-end of the 23S rRNA, where it nucleates assembly of the 50S subunit. This Clostridium tetani (strain Massachusetts / E88) protein is Large ribosomal subunit protein uL3.